Reading from the N-terminus, the 77-residue chain is uncharacterized protein (77 aa).

A disordered region spans residues 54–77 (HHGRKHKEDMEARHEQLTKGGTIL). The segment covering 59–70 (HKEDMEARHEQL) has biased composition (basic and acidic residues).

This is an uncharacterized protein from Escherichia coli O157:H7.